A 146-amino-acid chain; its full sequence is Large ribosomal subunit protein uL15x (146 aa).

2 stretches are compositionally biased toward basic residues: residues 1–14 (MTTR…KRGH) and 21–30 (RIGKHRKHPG). Residues 1-35 (MTTRFKKNRKKRGHVSAGHGRIGKHRKHPGGRGNA) form a disordered region.

The protein belongs to the universal ribosomal protein uL15 family.

The chain is Large ribosomal subunit protein uL15x (RPL27AC) from Arabidopsis thaliana (Mouse-ear cress).